The primary structure comprises 36 residues: Photosystem II reaction center protein M (36 aa).

A Blocked amino end (Met) modification is found at methionine 1. Over 1-11 (MEVNQLGFIAT) the chain is Lumenal. A helical membrane pass occupies residues 12–27 (ALFVLVPSVFLIILYV). Residues 28–36 (QTESQQKSS) lie on the Cytoplasmic side of the membrane.

This sequence belongs to the PsbM family. In terms of assembly, PSII is composed of 1 copy each of membrane proteins PsbA, PsbB, PsbC, PsbD, PsbE, PsbF, PsbH, PsbI, PsbJ, PsbK, PsbL, PsbM, PsbT, PsbX, PsbY, PsbZ, Psb30/Ycf12, peripheral proteins PsbO, CyanoQ (PsbQ), PsbU, PsbV, PsbU, PsbV and a large number of cofactors. It forms dimeric complexes. PSII binds multiple chlorophylls, carotenoids and specific lipids. serves as cofactor.

The protein resides in the cellular thylakoid membrane. Functionally, one of the components of the core complex of photosystem II (PSII). PSII is a light-driven water:plastoquinone oxidoreductase that uses light energy to abstract electrons from H(2)O, generating O(2) and a proton gradient subsequently used for ATP formation. It consists of a core antenna complex that captures photons, and an electron transfer chain that converts photonic excitation into a charge separation. This subunit is found at the monomer-monomer interface. Probably involved in dimerization of PSII; at the monomer-monomer interface the only protein-protein contacts observed are between the 2 PsbM subunits. Lipids, chlorophylls and carotenoids contribute strongly to PSII dimerization. The polypeptide is Photosystem II reaction center protein M (Thermostichus vulcanus (Synechococcus vulcanus)).